The sequence spans 382 residues: Anhydro-N-acetylmuramic acid kinase (382 aa).

An ATP-binding site is contributed by glycine 9 to aspartate 16.

The protein belongs to the anhydro-N-acetylmuramic acid kinase family.

The catalysed reaction is 1,6-anhydro-N-acetyl-beta-muramate + ATP + H2O = N-acetyl-D-muramate 6-phosphate + ADP + H(+). It functions in the pathway amino-sugar metabolism; 1,6-anhydro-N-acetylmuramate degradation. The protein operates within cell wall biogenesis; peptidoglycan recycling. Catalyzes the specific phosphorylation of 1,6-anhydro-N-acetylmuramic acid (anhMurNAc) with the simultaneous cleavage of the 1,6-anhydro ring, generating MurNAc-6-P. Is required for the utilization of anhMurNAc either imported from the medium or derived from its own cell wall murein, and thus plays a role in cell wall recycling. This Bacillus anthracis (strain A0248) protein is Anhydro-N-acetylmuramic acid kinase.